The following is a 111-amino-acid chain: C-type lectin lectoxin-Enh2 (111 aa).

A signal peptide spans 1–23 (MGQFTVVSLGLLAMFLSLSGAKG). Cys-26 and Cys-37 are joined by a disulfide. In terms of domain architecture, C-type lectin spans 33–108 (RNGVCNKLFP…CASLHPFICQ (76 aa)). The Mannose-binding signature appears at 72–74 (EPN). Residues Glu-80, Asn-95, and Asp-96 each coordinate Ca(2+). Cys-82 and Cys-99 are oxidised to a cystine.

It belongs to the true venom lectin family. As to expression, expressed by the venom gland.

The protein resides in the secreted. Functionally, mannose-binding lectin which recognizes specific carbohydrate structures and agglutinates a variety of animal cells by binding to cell-surface glycoproteins and glycolipids. May be a calcium-dependent lectin. This chain is C-type lectin lectoxin-Enh2, found in Pseudoferania polylepis (Macleay's water snake).